Here is a 724-residue protein sequence, read N- to C-terminus: MSSAKKKPSLVTCPQCNAVVLTKDSLRHQDFCGKPVVESEIACAQNGTLRGFNVAVDKAEGFLPPDAVGWEKEHSILINQQTMESLGLLARQPVRIIHSSDSFIGIVWPCKEVALLKVSIISSRIARERMITLESCGRVEKLKSLSVTVKTSLTLNPALSGFLEAYLSHSYLQYNSSVDLKYLGQNVTVTPEEPIESKMSAMGIDDDKKRNSKVVSTAVGYKIQILNASAEGSTSDVLQTLPTDLSNIGGCFTAKQVLEDYVISPVRQKESPCSVLIWGLPGSGKTLLLKEVALVLSGSTTYIGSCEELMELNGVTTGNIVIVDVNELEKENTKANRALSFLLGDEKKCVILCVRSSETLDIGFRVRFPIEAEITVPTQDERLDILSKIGNIYNFPLELHLDVARHTHGFTGGDLCSLLKAAKFARGRTHLERVNDARKRIRPTGIRQFILEVPNVSWNDIGGNEELKLEIQQAVIWPQKHPEAFERFGIDPPAGILLYGPPGCSKTLIARALASEAKMNFLAVKGPELFSKWVGDSEKAIRDLFSRARQVAPTIVFFDEIDAVGSSRGSEKSSGVSDRVLAQLLTELDGLEKSSRVILLAATNRPDQLDSALLRPGRLDRAIYVGLPCEVTRRAILEMRTKKMKFDDTVRTIDKLVEKTSGYSGAELVAVCRTAAMFAMRESIDATIVQWTHFEQALAAVVSRTEAYLLEIYDDFKAGRASNA.

ATP-binding positions include 281–287 (PGSGKTL) and 503–508 (GCSKTL).

It belongs to the AAA ATPase family. AFG2 subfamily. In terms of assembly, homohexamer; ATP binding induces oligomerization. Forms a ring-shaped particle of about 12 nm diameter, that displays 6-fold radial symmetry. Interacts (via N-terminus) with kinase air-2; the interaction is direct and inhibits air-2 kinase activity in an ATPase-dependent manner.

Its subcellular location is the cytoplasm. The catalysed reaction is ATP + H2O = ADP + phosphate + H(+). Its function is as follows. ATP-dependent chaperone which uses the energy provided by ATP hydrolysis to generate mechanical force to disassemble protein complexes. Required for various steps of embryonic mitosis including centrosome duplication, spindle assembly, ER dynamics and cell cycle progression. Regulates the stability and activity of kinase air-2, a component of the chromosomal passenger complex (CPC). Inhibits air-2 kinase activity from metaphase to late telophase and negatively regulates air-2 stability during mitotic exit. Controls ER transition into sheet-like structures at the onset of mitosis, possibly by regulating homotypic membrane fusion. The chain is ATPase family protein 2 homolog from Caenorhabditis elegans.